The sequence spans 338 residues: Limbic system-associated membrane protein (338 aa).

An N-terminal signal peptide occupies residues 1-28 (MVGRVQPDRKQLPLVLLRLLCLLPTGLP). Ig-like C2-type domains are found at residues 29–122 (VRSV…PKTS), 132–214 (PKIS…VKVT), and 219–304 (PTIT…ASLV). Asn40 and Asn66 each carry an N-linked (GlcNAc...) asparagine glycan. Cys53 and Cys111 are oxidised to a cystine. Tyr94 is modified (phosphotyrosine). 2 N-linked (GlcNAc...) asparagine glycosylation sites follow: Asn136 and Asn148. 2 cysteine pairs are disulfide-bonded: Cys153–Cys197 and Cys239–Cys290. 3 N-linked (GlcNAc...) asparagine glycosylation sites follow: Asn279, Asn287, and Asn300. Residue Asn315 is the site of GPI-anchor amidated asparagine; alternate attachment. A glycan (N-linked (GlcNAc...) asparagine; alternate) is linked at Asn315. Residues 316-338 (GSISLAVPLWLLAASLFCLLSKC) constitute a propeptide, removed in mature form.

Belongs to the immunoglobulin superfamily. IgLON family. Expressed mostly by neurons comprising limbic-associated cortical and subcortical regions that function in cognition, emotion, memory, and learning.

The protein resides in the cell membrane. In terms of biological role, mediates selective neuronal growth and axon targeting. Contributes to the guidance of developing axons and remodeling of mature circuits in the limbic system. Essential for normal growth of the hippocampal mossy fiber projection. In Rattus norvegicus (Rat), this protein is Limbic system-associated membrane protein (Lsamp).